The chain runs to 216 residues: Probable phosphatase SPAC513.02 (216 aa).

Residue His-15 is the Tele-phosphohistidine intermediate of the active site.

Belongs to the phosphoglycerate mutase family. BPG-dependent PGAM subfamily.

It localises to the cytoplasm. The protein localises to the nucleus. The chain is Probable phosphatase SPAC513.02 from Schizosaccharomyces pombe (strain 972 / ATCC 24843) (Fission yeast).